Reading from the N-terminus, the 103-residue chain is Small ribosomal subunit protein uS10 (103 aa).

This sequence belongs to the universal ribosomal protein uS10 family. Part of the 30S ribosomal subunit.

Its function is as follows. Involved in the binding of tRNA to the ribosomes. This is Small ribosomal subunit protein uS10 from Colwellia psychrerythraea (strain 34H / ATCC BAA-681) (Vibrio psychroerythus).